Reading from the N-terminus, the 431-residue chain is Histidine--tRNA ligase (431 aa).

This sequence belongs to the class-II aminoacyl-tRNA synthetase family. As to quaternary structure, homodimer.

It is found in the cytoplasm. It catalyses the reaction tRNA(His) + L-histidine + ATP = L-histidyl-tRNA(His) + AMP + diphosphate + H(+). The chain is Histidine--tRNA ligase from Neisseria meningitidis serogroup C (strain 053442).